The following is a 286-amino-acid chain: Bifunctional protein FolD (286 aa).

NADP(+) contacts are provided by residues 165-167 (GRS), Ser-190, and Val-231.

This sequence belongs to the tetrahydrofolate dehydrogenase/cyclohydrolase family. In terms of assembly, homodimer.

It catalyses the reaction (6R)-5,10-methylene-5,6,7,8-tetrahydrofolate + NADP(+) = (6R)-5,10-methenyltetrahydrofolate + NADPH. The enzyme catalyses (6R)-5,10-methenyltetrahydrofolate + H2O = (6R)-10-formyltetrahydrofolate + H(+). It participates in one-carbon metabolism; tetrahydrofolate interconversion. Its function is as follows. Catalyzes the oxidation of 5,10-methylenetetrahydrofolate to 5,10-methenyltetrahydrofolate and then the hydrolysis of 5,10-methenyltetrahydrofolate to 10-formyltetrahydrofolate. This Bacillus cereus (strain G9842) protein is Bifunctional protein FolD.